The following is a 251-amino-acid chain: Sec-independent protein translocase protein TatC (251 aa).

The next 6 helical transmembrane spans lie at 23-43, 73-93, 104-124, 159-179, 197-217, and 218-238; these read AFII…SFLL, SAFT…YLFI, IIAF…IFVF, LVIH…VIIV, IAVV…ILSQ, and FALA…CNFI.

Belongs to the TatC family. The Tat system comprises two distinct complexes: a TatABC complex, containing multiple copies of TatA, TatB and TatC subunits, and a separate TatA complex, containing only TatA subunits. Substrates initially bind to the TatABC complex, which probably triggers association of the separate TatA complex to form the active translocon.

It is found in the cell inner membrane. Part of the twin-arginine translocation (Tat) system that transports large folded proteins containing a characteristic twin-arginine motif in their signal peptide across membranes. Together with TatB, TatC is part of a receptor directly interacting with Tat signal peptides. The chain is Sec-independent protein translocase protein TatC from Rickettsia prowazekii (strain Madrid E).